Here is a 352-residue protein sequence, read N- to C-terminus: UDP-N-acetylglucosamine--N-acetylmuramyl-(pentapeptide) pyrophosphoryl-undecaprenol N-acetylglucosamine transferase (352 aa).

Positions 195 and 287 each coordinate UDP-N-acetyl-alpha-D-glucosamine.

Belongs to the glycosyltransferase 28 family. MurG subfamily.

The protein localises to the cell membrane. The enzyme catalyses Mur2Ac(oyl-L-Ala-gamma-D-Glu-L-Lys-D-Ala-D-Ala)-di-trans,octa-cis-undecaprenyl diphosphate + UDP-N-acetyl-alpha-D-glucosamine = beta-D-GlcNAc-(1-&gt;4)-Mur2Ac(oyl-L-Ala-gamma-D-Glu-L-Lys-D-Ala-D-Ala)-di-trans,octa-cis-undecaprenyl diphosphate + UDP + H(+). It functions in the pathway cell wall biogenesis; peptidoglycan biosynthesis. Its function is as follows. Cell wall formation. Catalyzes the transfer of a GlcNAc subunit on undecaprenyl-pyrophosphoryl-MurNAc-pentapeptide (lipid intermediate I) to form undecaprenyl-pyrophosphoryl-MurNAc-(pentapeptide)GlcNAc (lipid intermediate II). The protein is UDP-N-acetylglucosamine--N-acetylmuramyl-(pentapeptide) pyrophosphoryl-undecaprenol N-acetylglucosamine transferase of Streptococcus pneumoniae (strain ATCC BAA-255 / R6).